The sequence spans 215 residues: dITP/XTP pyrophosphatase (215 aa).

13 to 18 (THNTGK) provides a ligand contact to substrate. The Proton acceptor role is filled by aspartate 74. Aspartate 74 contacts Mg(2+). Substrate is bound by residues serine 75, 163 to 166 (FGFD), lysine 186, and 199 to 200 (HR).

Belongs to the HAM1 NTPase family. In terms of assembly, homodimer. Mg(2+) is required as a cofactor.

It carries out the reaction XTP + H2O = XMP + diphosphate + H(+). It catalyses the reaction dITP + H2O = dIMP + diphosphate + H(+). The enzyme catalyses ITP + H2O = IMP + diphosphate + H(+). In terms of biological role, pyrophosphatase that catalyzes the hydrolysis of nucleoside triphosphates to their monophosphate derivatives, with a high preference for the non-canonical purine nucleotides XTP (xanthosine triphosphate), dITP (deoxyinosine triphosphate) and ITP. Seems to function as a house-cleaning enzyme that removes non-canonical purine nucleotides from the nucleotide pool, thus preventing their incorporation into DNA/RNA and avoiding chromosomal lesions. In Bartonella quintana (strain Toulouse) (Rochalimaea quintana), this protein is dITP/XTP pyrophosphatase.